The following is a 355-amino-acid chain: Putative inositol monophosphatase 3 (355 aa).

Residues 16–36 traverse the membrane as a helical segment; sequence VPATIFAILLTIVLVYFLNFH. Positions 127, 167, 169, 170, and 292 each coordinate Mg(2+). Glu127 is a substrate binding site. Substrate-binding positions include 169 to 172 and Asp292; that span reads LDAT.

Belongs to the inositol monophosphatase superfamily. Mg(2+) is required as a cofactor.

The protein localises to the membrane. It carries out the reaction a myo-inositol phosphate + H2O = myo-inositol + phosphate. Its pathway is polyol metabolism; myo-inositol biosynthesis; myo-inositol from D-glucose 6-phosphate: step 2/2. The chain is Putative inositol monophosphatase 3 from Drosophila pseudoobscura pseudoobscura (Fruit fly).